The chain runs to 124 residues: Group 1 truncated hemoglobin GlbN (124 aa).

Residues His-46, His-70, and His-117 each contribute to the heme site.

It belongs to the truncated hemoglobin family. Group I subfamily. In terms of assembly, monomer. The cofactor is heme.

In terms of biological role, forms a very stable complex with oxygen. The oxygen dissociation rate is 0.011 sec(-1). This chain is Group 1 truncated hemoglobin GlbN (glbN), found in Synechocystis sp. (strain ATCC 27184 / PCC 6803 / Kazusa).